Reading from the N-terminus, the 417-residue chain is Phosphoribosylamine--glycine ligase (417 aa).

The 200-residue stretch at 108–307 (KRIMDEAGVP…LSTLLFAAAT (200 aa)) folds into the ATP-grasp domain. Position 134–188 (134–188 (LDEFGAPYVVKADGLAAGKGVIVTEDRAAALAHAARYLTHGSVLVEEFLDGEEVS)) interacts with ATP. Mg(2+)-binding residues include Glu277 and Asn279.

The protein belongs to the GARS family. Mg(2+) serves as cofactor. Requires Mn(2+) as cofactor.

The catalysed reaction is 5-phospho-beta-D-ribosylamine + glycine + ATP = N(1)-(5-phospho-beta-D-ribosyl)glycinamide + ADP + phosphate + H(+). It participates in purine metabolism; IMP biosynthesis via de novo pathway; N(1)-(5-phospho-D-ribosyl)glycinamide from 5-phospho-alpha-D-ribose 1-diphosphate: step 2/2. The sequence is that of Phosphoribosylamine--glycine ligase from Leifsonia xyli subsp. xyli (strain CTCB07).